Reading from the N-terminus, the 202-residue chain is Zinc metalloproteinase barnettlysin-1 (202 aa).

The Peptidase M12B domain occupies 6 to 200 (RYVELFIVVD…MKENPQCILN (195 aa)). The Ca(2+) site is built by E9 and D93. Cystine bridges form between C117-C197, C157-C181, and C159-C164. H142 lines the Zn(2+) pocket. E143 is an active-site residue. Residues H146 and H152 each contribute to the Zn(2+) site. 2 residues coordinate Ca(2+): C197 and N200.

Monomer. It depends on Zn(2+) as a cofactor. In terms of tissue distribution, expressed by the venom gland.

The protein resides in the secreted. Functionally, non-hemorrhagic metalloproteinase that hydrolyzes the alpha chains of fibrinogen and fibrin but has no activity on beta- and gamma-chains. Cleaves X-Leu bonds. Inhibits platelet aggregation induced by the von Willebrand factor (VWF) (IC(50) is 1.4 uM) and type I collagen (IC(50) is 3.2 uM). Acts by cleaving the vWF and its receptor GPIb, and by cleaving the collagen-binding Alpha-2A domain of the collagen receptor alpha-2/beta-1 integrin (ITGA2/ITGB1). Also degrades the extracellular matrix protein fibronectin (FN1), but has no effect on laminin and type I collagen. The protein is Zinc metalloproteinase barnettlysin-1 of Bothrops barnetti (Barnett's lancehead).